The primary structure comprises 142 residues: Hemoglobin subunit alpha (142 aa).

In terms of domain architecture, Globin spans Val-2 to Arg-142. His-60 provides a ligand contact to O2. Position 89 (His-89) interacts with heme b.

It belongs to the globin family. In terms of assembly, heterotetramer of two alpha chains and two beta chains. As to expression, red blood cells.

Its function is as follows. Involved in oxygen transport from gills to the various peripheral tissues. In Bathyraja eatonii (Eaton's skate), this protein is Hemoglobin subunit alpha (HBA).